We begin with the raw amino-acid sequence, 350 residues long: Biotin synthase (350 aa).

Positions 38–257 (NKVQVSTLLS…AVARIIMPMS (220 aa)) constitute a Radical SAM core domain. 3 residues coordinate [4Fe-4S] cluster: C53, C57, and C60. The [2Fe-2S] cluster site is built by C97, C128, C188, and R260.

It belongs to the radical SAM superfamily. Biotin synthase family. Homodimer. It depends on [4Fe-4S] cluster as a cofactor. Requires [2Fe-2S] cluster as cofactor.

The catalysed reaction is (4R,5S)-dethiobiotin + (sulfur carrier)-SH + 2 reduced [2Fe-2S]-[ferredoxin] + 2 S-adenosyl-L-methionine = (sulfur carrier)-H + biotin + 2 5'-deoxyadenosine + 2 L-methionine + 2 oxidized [2Fe-2S]-[ferredoxin]. The protein operates within cofactor biosynthesis; biotin biosynthesis; biotin from 7,8-diaminononanoate: step 2/2. Catalyzes the conversion of dethiobiotin (DTB) to biotin by the insertion of a sulfur atom into dethiobiotin via a radical-based mechanism. The sequence is that of Biotin synthase from Photobacterium profundum (strain SS9).